Consider the following 242-residue polypeptide: Uridylate kinase (242 aa).

11–14 (KLSG) lines the ATP pocket. Positions 19-24 (GDKGVG) are involved in allosteric activation by GTP. Position 53 (Gly-53) interacts with UMP. ATP is bound by residues Gly-54 and Arg-58. UMP-binding positions include Asp-73 and 134-141 (IGSPYFST). 3 residues coordinate ATP: Asn-162, Tyr-168, and Asp-171.

Belongs to the UMP kinase family. In terms of assembly, homohexamer.

It is found in the cytoplasm. It catalyses the reaction UMP + ATP = UDP + ADP. The protein operates within pyrimidine metabolism; CTP biosynthesis via de novo pathway; UDP from UMP (UMPK route): step 1/1. With respect to regulation, allosterically activated by GTP. Inhibited by UTP. In terms of biological role, catalyzes the reversible phosphorylation of UMP to UDP. The chain is Uridylate kinase from Streptococcus agalactiae serotype III (strain NEM316).